Reading from the N-terminus, the 314-residue chain is MAGNSKRRGAVRKAGTKKGPTVGSGGVRRRGLEGRGATPPAHQRPNHPAAKRAAKAAKQQQRRPARKTDETELVLGRNPVVECLRAEVPATALYVAMGTEADERVTEAVQIAADNGISILEVPRSDLDRMSNNALHQGLGLQVPPYDYAHPDDLLATAKADGAPALLVALDNISDPRNLGAIVRSVAAFGGHGVLIPQRRSASVTAVAWRTSAGAAARLPVARATNLNRTLKSWADGGLQVVGLDADGDTTLDELDGTGPVVVVVGSEGKGLSRLVRENCDAVVSIPMAGPTESLNASVAAGVVLAEIARQRRS.

Composition is skewed to basic residues over residues 1–16 (MAGNSKRRGAVRKAGT) and 49–65 (AAKRAAKAAKQQQRRPA). Positions 1–73 (MAGNSKRRGA…PARKTDETEL (73 aa)) are disordered. S-adenosyl-L-methionine is bound by residues Gly266, Ile286, and Leu295.

Belongs to the class IV-like SAM-binding methyltransferase superfamily. RNA methyltransferase TrmH family.

This is an uncharacterized protein from Mycobacterium sp. (strain KMS).